A 587-amino-acid chain; its full sequence is Envelope glycoprotein (587 aa).

The first 22 residues, 1–22 (MNFNHHFTWSLVIISQIFQVQA), serve as a signal peptide directing secretion. Residues 23-527 (GFGDPREALL…TGFHGLLPYV (505 aa)) lie on the Extracellular side of the membrane. N-linked (GlcNAc...) asparagine; by host glycosylation is found at Asn120 and Asn237. The CXXC motif lies at 248-251 (CWLC). Cystine bridges form between Cys248-Cys251, Cys248-Cys484, and Cys476-Cys483. N-linked (GlcNAc...) asparagine; by host glycosylation is found at Asn266, Asn271, Asn277, Asn280, Asn295, Asn308, Asn322, Asn328, Asn340, and Asn358. Positions 399 to 419 (FIPLVIGLGITTAVSTGTAGL) are fusion peptide. 2 coiled-coil regions span residues 420–470 (GVSL…LLTA) and 480–516 (QEKC…DNPF). Residues 459–475 (LQNRRGLDLLTAEQGGI) are immunosuppression. Positions 476–484 (CLALQEKCC) match the CX6CC motif. The N-linked (GlcNAc...) asparagine; by host glycan is linked to Asn488. The helical transmembrane segment at 528–548 (MPLLGPLLCLLLVLSFGPIIF) threads the bilayer. Topologically, residues 549 to 587 (NKLMTFIKHQIESIQAKPIQVHYHRLEQEDHGGSYLNLT) are cytoplasmic. The YXXL motif; contains endocytosis signal motif lies at 571 to 574 (YHRL).

In terms of assembly, the mature envelope protein (Env) consists of a trimer of SU-TM heterodimers attached by a labile interchain disulfide bond. Post-translationally, specific enzymatic cleavages in vivo yield mature proteins. Envelope glycoproteins are synthesized as an inactive precursor that is N-glycosylated and processed likely by host cell furin or by a furin-like protease in the Golgi to yield the mature SU and TM proteins. The cleavage site between SU and TM requires the minimal sequence [KR]-X-[KR]-R. The R-peptide is released from the C-terminus of the cytoplasmic tail of the TM protein upon particle formation as a result of proteolytic cleavage by the viral protease. Cleavage of this peptide is required for TM to become fusogenic. In terms of processing, the CXXC motif is highly conserved across a broad range of retroviral envelope proteins. It is thought to participate in the formation of a labile disulfide bond possibly with the CX6CC motif present in the transmembrane protein. Isomerization of the intersubunit disulfide bond to an SU intrachain disulfide bond is thought to occur upon receptor recognition in order to allow membrane fusion.

The protein localises to the virion membrane. It is found in the host cell membrane. Its function is as follows. The surface protein (SU) attaches the virus to the host cell by binding to its receptor. This interaction triggers the refolding of the transmembrane protein (TM) and is thought to activate its fusogenic potential by unmasking its fusion peptide. Fusion occurs at the host cell plasma membrane. In terms of biological role, the transmembrane protein (TM) acts as a class I viral fusion protein. Under the current model, the protein has at least 3 conformational states: pre-fusion native state, pre-hairpin intermediate state, and post-fusion hairpin state. During viral and target cell membrane fusion, the coiled coil regions (heptad repeats) assume a trimer-of-hairpins structure, positioning the fusion peptide in close proximity to the C-terminal region of the ectodomain. The formation of this structure appears to drive apposition and subsequent fusion of viral and target cell membranes. Membranes fusion leads to delivery of the nucleocapsid into the cytoplasm. In Simian retrovirus SRV-1, this protein is Envelope glycoprotein (env).